A 337-amino-acid polypeptide reads, in one-letter code: 3-isopropylmalate dehydrogenase (337 aa).

Substrate-binding residues include arginine 88, arginine 98, arginine 122, and aspartate 212. Mg(2+)-binding residues include aspartate 212, aspartate 236, and aspartate 240. 272-284 (GSAPDIAGKGIAD) lines the NAD(+) pocket.

The protein belongs to the isocitrate and isopropylmalate dehydrogenases family. LeuB type 2 subfamily. As to quaternary structure, homodimer. Mg(2+) is required as a cofactor. It depends on Mn(2+) as a cofactor.

It localises to the cytoplasm. The catalysed reaction is (2R,3S)-3-isopropylmalate + NAD(+) = 4-methyl-2-oxopentanoate + CO2 + NADH. Its pathway is amino-acid biosynthesis; L-leucine biosynthesis; L-leucine from 3-methyl-2-oxobutanoate: step 3/4. Functionally, catalyzes the oxidation of 3-carboxy-2-hydroxy-4-methylpentanoate (3-isopropylmalate) to 3-carboxy-4-methyl-2-oxopentanoate. The product decarboxylates to 4-methyl-2 oxopentanoate. The chain is 3-isopropylmalate dehydrogenase from Rhodococcus erythropolis (strain PR4 / NBRC 100887).